The primary structure comprises 252 residues: tRNA (guanine-N(1)-)-methyltransferase (252 aa).

Residues Gly117 and 137–142 each bind S-adenosyl-L-methionine; that span reads IGDYVL.

It belongs to the RNA methyltransferase TrmD family. Homodimer.

It is found in the cytoplasm. It carries out the reaction guanosine(37) in tRNA + S-adenosyl-L-methionine = N(1)-methylguanosine(37) in tRNA + S-adenosyl-L-homocysteine + H(+). Specifically methylates guanosine-37 in various tRNAs. This Idiomarina loihiensis (strain ATCC BAA-735 / DSM 15497 / L2-TR) protein is tRNA (guanine-N(1)-)-methyltransferase.